Consider the following 496-residue polypeptide: Alanine aminotransferase 1 (496 aa).

N-acetylalanine is present on Ala2. Thr22 carries the phosphothreonine modification. Lys314 carries the N6-(pyridoxal phosphate)lysine modification.

The protein belongs to the class-I pyridoxal-phosphate-dependent aminotransferase family. Alanine aminotransferase subfamily. As to quaternary structure, homodimer. It depends on pyridoxal 5'-phosphate as a cofactor. As to expression, liver, kidney, heart, and skeletal muscles. Expressed at moderate levels in the adipose tissue.

The protein localises to the cytoplasm. The catalysed reaction is L-alanine + 2-oxoglutarate = pyruvate + L-glutamate. Its pathway is amino-acid degradation; L-alanine degradation via transaminase pathway; pyruvate from L-alanine: step 1/1. Functionally, catalyzes the reversible transamination between alanine and 2-oxoglutarate to form pyruvate and glutamate. Participates in cellular nitrogen metabolism and also in liver gluconeogenesis starting with precursors transported from skeletal muscles. The protein is Alanine aminotransferase 1 (GPT) of Homo sapiens (Human).